Here is a 448-residue protein sequence, read N- to C-terminus: Omega-6 fatty acid desaturase, chloroplastic (448 aa).

A chloroplast-targeting transit peptide spans 1 to 69 (MASRIADSLF…VKRRIGCIKA (69 aa)). Valine 70 is modified (N-acetylvaline). Helical transmembrane passes span 124–144 (LKAL…LFMI) and 149–169 (WYLL…FFVI). Residues 171–175 (HDCAH) carry the Histidine box-1 motif. The short motif at 207–211 (HDRHH) is the Histidine box-2 element. 2 helical membrane-spanning segments follow: residues 282-302 (VFAF…ILGW) and 303-323 (VKFW…FTMV). The Histidine box-3 motif lies at 367–371 (HIPHH).

The protein belongs to the fatty acid desaturase type 1 family.

It localises to the plastid. The protein localises to the chloroplast inner membrane. It catalyses the reaction a (9Z)-octadecenoyl-containing glycerolipid + 2 reduced [2Fe-2S]-[ferredoxin] + O2 + 2 H(+) = a (9Z,12Z)-octadecadienoyl-containing glycerolipid + 2 oxidized [2Fe-2S]-[ferredoxin] + 2 H2O. It participates in lipid metabolism; polyunsaturated fatty acid biosynthesis. Chloroplast omega-6 fatty acid desaturase introduces the second double bond in the biosynthesis of 16:3 and 18:3 fatty acids, important constituents of plant membranes. It is thought to use ferredoxin as an electron donor and to act on fatty acids esterified to galactolipids, sulfolipids and phosphatidylglycerol. In Arabidopsis thaliana (Mouse-ear cress), this protein is Omega-6 fatty acid desaturase, chloroplastic.